We begin with the raw amino-acid sequence, 338 residues long: Acetoin:2,6-dichlorophenolindophenol oxidoreductase subunit beta (338 aa).

Tetramer of 2 alpha and 2 beta subunits.

It functions in the pathway ketone degradation; acetoin degradation. Functionally, catalyzes the 2,6-dichlorophenolindophenol-dependent cleavage of acetoin into acetate and acetaldehyde, in vitro. The beta subunit is probably not the catalytic subunit of the enzyme. This Cupriavidus necator (strain ATCC 17699 / DSM 428 / KCTC 22496 / NCIMB 10442 / H16 / Stanier 337) (Ralstonia eutropha) protein is Acetoin:2,6-dichlorophenolindophenol oxidoreductase subunit beta (acoB).